Reading from the N-terminus, the 167-residue chain is Regulator of sigma D (167 aa).

It belongs to the Rsd/AlgQ family. As to quaternary structure, interacts with RpoD.

The protein resides in the cytoplasm. In terms of biological role, binds RpoD and negatively regulates RpoD-mediated transcription activation by preventing the interaction between the primary sigma factor RpoD with the catalytic core of the RNA polymerase and with promoter DNA. May be involved in replacement of the RNA polymerase sigma subunit from RpoD to RpoS during the transition from exponential growth to the stationary phase. The chain is Regulator of sigma D from Yersinia enterocolitica serotype O:8 / biotype 1B (strain NCTC 13174 / 8081).